The sequence spans 610 residues: C4b-binding protein alpha chain (610 aa).

A signal peptide spans 1-48; it reads MKHQRVPVMILHSKGTMASWPFSRLWSISDPILFQVTLVATLLATVLG. Sushi domains lie at 49–109, 110–171, 172–236, 237–296, 297–364, 365–427, 428–485, and 486–543; these read SCGI…FCVK, KRCE…QCII, AKCE…SCKK, VICV…TCEL, NGCL…ECKE, VCCP…ECRP, DCKS…QCKA, and LCLK…KCEW. Intrachain disulfides connect C50-C95, C80-C107, C112-C153, C139-C169, C174-C217, C203-C234, C239-C281, C267-C294, C299-C350, C334-C362, C367-C412, C402-C425, C429-C471, C457-C483, C487-C528, and C514-C541. N66 is a glycosylation site (N-linked (GlcNAc...) asparagine). An N-linked (GlcNAc...) asparagine glycan is attached at N221. 2 N-linked (GlcNAc...) asparagine glycosylation sites follow: N525 and N602.

Disulfide-linked complex of alpha and beta chains.

The protein resides in the secreted. Its function is as follows. Controls the classical pathway of complement activation. It binds as a cofactor to C3b/C4b inactivator (C3bINA), which then hydrolyzes the complement fragment C4b. It also accelerates the degradation of the C4bC2a complex (C3 convertase) by dissociating the complement fragment C2a. Alpha chain binds C4b. It also interacts with serum amyloid P component. This is C4b-binding protein alpha chain (C4BPA) from Bos taurus (Bovine).